Here is a 339-residue protein sequence, read N- to C-terminus: ATP-dependent 6-phosphofructokinase (339 aa).

ATP contacts are provided by residues G11, 72 to 73, and 102 to 105; these read RY and GDGS. A Mg(2+)-binding site is contributed by D103. Residues 125 to 127, R162, and 169 to 171 contribute to the substrate site; these read TID and MGR. The Proton acceptor role is filled by D127. ADP-binding positions include 185-187 and 214-216; these read GAD and KSH. Substrate contacts are provided by residues E223, R245, and 251–254; that span reads HVIR.

It belongs to the phosphofructokinase type A (PFKA) family. ATP-dependent PFK group I subfamily. Prokaryotic clade 'B1' sub-subfamily. As to quaternary structure, homotetramer. The cofactor is Mg(2+).

Its subcellular location is the cytoplasm. The catalysed reaction is beta-D-fructose 6-phosphate + ATP = beta-D-fructose 1,6-bisphosphate + ADP + H(+). It participates in carbohydrate degradation; glycolysis; D-glyceraldehyde 3-phosphate and glycerone phosphate from D-glucose: step 3/4. With respect to regulation, allosterically activated by ADP and other diphosphonucleosides, and allosterically inhibited by phosphoenolpyruvate. Functionally, catalyzes the phosphorylation of D-fructose 6-phosphate to fructose 1,6-bisphosphate by ATP, the first committing step of glycolysis. The chain is ATP-dependent 6-phosphofructokinase from Streptococcus thermophilus (strain ATCC BAA-491 / LMD-9).